We begin with the raw amino-acid sequence, 458 residues long: Glutamyl-tRNA(Gln) amidotransferase subunit D (458 aa).

An Asparaginase/glutaminase domain is found at Pro97 to Asn434. Residues Thr107, Thr185, Asp186, and Lys264 contribute to the active site.

Belongs to the asparaginase 1 family. GatD subfamily. As to quaternary structure, heterodimer of GatD and GatE.

The catalysed reaction is L-glutamyl-tRNA(Gln) + L-glutamine + ATP + H2O = L-glutaminyl-tRNA(Gln) + L-glutamate + ADP + phosphate + H(+). Functionally, allows the formation of correctly charged Gln-tRNA(Gln) through the transamidation of misacylated Glu-tRNA(Gln) in organisms which lack glutaminyl-tRNA synthetase. The reaction takes place in the presence of glutamine and ATP through an activated gamma-phospho-Glu-tRNA(Gln). The GatDE system is specific for glutamate and does not act on aspartate. This is Glutamyl-tRNA(Gln) amidotransferase subunit D from Methanopyrus kandleri (strain AV19 / DSM 6324 / JCM 9639 / NBRC 100938).